A 214-amino-acid polypeptide reads, in one-letter code: Metalloproteinase inhibitor 3 (214 aa).

Positions 1-26 (MVFSTTAALSLLLALSSMQLSEVSEA) are cleaved as a signal peptide. Cys27 provides a ligand contact to Zn(2+). Involved in metalloproteinase-binding stretches follow at residues 27-30 (CTCM) and 91-92 (ES). Intrachain disulfides connect Cys27–Cys94, Cys29–Cys121, Cys39–Cys146, Cys148–Cys195, Cys153–Cys158, and Cys166–Cys187. The 120-residue stretch at 27 to 146 (CTCMPNHPQE…GLNHRYQYGC (120 aa)) folds into the NTR domain. Asn210 carries N-linked (GlcNAc...) asparagine glycosylation.

This sequence belongs to the protease inhibitor I35 (TIMP) family. In terms of tissue distribution, expressed abundantly in brain and cartilage.

The protein resides in the secreted. The protein localises to the extracellular space. It localises to the extracellular matrix. Its function is as follows. Complexes with metalloproteinases (such as collagenases) and irreversibly inactivates them by binding to their catalytic zinc cofactor. May form part of a tissue-specific acute response to remodeling stimuli. The chain is Metalloproteinase inhibitor 3 (TIMP3) from Scyliorhinus torazame (Cloudy catshark).